Consider the following 139-residue polypeptide: Nucleoside diphosphate kinase (139 aa).

6 residues coordinate ATP: lysine 11, phenylalanine 59, arginine 87, threonine 93, arginine 104, and asparagine 114. Histidine 117 (pros-phosphohistidine intermediate) is an active-site residue.

Belongs to the NDK family. As to quaternary structure, homotetramer. Mg(2+) serves as cofactor.

It is found in the cytoplasm. The catalysed reaction is a 2'-deoxyribonucleoside 5'-diphosphate + ATP = a 2'-deoxyribonucleoside 5'-triphosphate + ADP. It catalyses the reaction a ribonucleoside 5'-diphosphate + ATP = a ribonucleoside 5'-triphosphate + ADP. Its function is as follows. Major role in the synthesis of nucleoside triphosphates other than ATP. The ATP gamma phosphate is transferred to the NDP beta phosphate via a ping-pong mechanism, using a phosphorylated active-site intermediate. The polypeptide is Nucleoside diphosphate kinase (Moorella thermoacetica (strain ATCC 39073 / JCM 9320)).